The sequence spans 236 residues: Phosphoribosylaminoimidazole-succinocarboxamide synthase (236 aa).

This sequence belongs to the SAICAR synthetase family.

The catalysed reaction is 5-amino-1-(5-phospho-D-ribosyl)imidazole-4-carboxylate + L-aspartate + ATP = (2S)-2-[5-amino-1-(5-phospho-beta-D-ribosyl)imidazole-4-carboxamido]succinate + ADP + phosphate + 2 H(+). Its pathway is purine metabolism; IMP biosynthesis via de novo pathway; 5-amino-1-(5-phospho-D-ribosyl)imidazole-4-carboxamide from 5-amino-1-(5-phospho-D-ribosyl)imidazole-4-carboxylate: step 1/2. The polypeptide is Phosphoribosylaminoimidazole-succinocarboxamide synthase (Rickettsia felis (strain ATCC VR-1525 / URRWXCal2) (Rickettsia azadi)).